Here is a 105-residue protein sequence, read N- to C-terminus: MIVTTTNNVEGHTIGQYLRIVSGETVAGINMFKDIGAGFRNITGGRSSAYEGEILQARETALKEMVDRALEMGAHGIVGVDVDYESLGQGGMVMVSATGTAVTFQ.

This sequence belongs to the UPF0145 family.

The chain is UPF0145 protein jk0060 from Corynebacterium jeikeium (strain K411).